A 657-amino-acid polypeptide reads, in one-letter code: Pentatricopeptide repeat-containing protein At2g37310 (657 aa).

PPR repeat units follow at residues 21-55, 56-86, 87-121, 128-165, 166-196, 197-232, 233-267, 268-298, 299-333, 334-364, 365-399, 400-430, 431-465, 466-501, and 502-536; these read DGGA…SIKP, DNFL…ITVR, NAFS…SCYS, DSIS…GFDS, DVFV…MSER, DVVS…DFKP, NGVT…HIQM, DLSL…MSEK, DSVT…GLST, WNAM…GSRP, NTVT…GADN, NIYV…CKDR, SLIA…GTKP, DDVT…DIEP, and GVEH…PIAK. Residues 537–612 are type E motif; that stretch reads VWGALLNGAS…IPGTSWIETE (76 aa). The type E(+) motif stretch occupies residues 613–643; the sequence is KGLRSFIAKDSSCERSKEMYEIIEGLVESMS.

Belongs to the PPR family. PCMP-E subfamily.

The protein is Pentatricopeptide repeat-containing protein At2g37310 (PCMP-E49) of Arabidopsis thaliana (Mouse-ear cress).